Here is a 235-residue protein sequence, read N- to C-terminus: Phosphoribosylaminoimidazole-succinocarboxamide synthase (235 aa).

It belongs to the SAICAR synthetase family.

The enzyme catalyses 5-amino-1-(5-phospho-D-ribosyl)imidazole-4-carboxylate + L-aspartate + ATP = (2S)-2-[5-amino-1-(5-phospho-beta-D-ribosyl)imidazole-4-carboxamido]succinate + ADP + phosphate + 2 H(+). It functions in the pathway purine metabolism; IMP biosynthesis via de novo pathway; 5-amino-1-(5-phospho-D-ribosyl)imidazole-4-carboxamide from 5-amino-1-(5-phospho-D-ribosyl)imidazole-4-carboxylate: step 1/2. In Clostridium perfringens (strain 13 / Type A), this protein is Phosphoribosylaminoimidazole-succinocarboxamide synthase.